Consider the following 81-residue polypeptide: Photosystem I iron-sulfur center (81 aa).

4Fe-4S ferredoxin-type domains follow at residues 2–31 (SHSV…MVPW) and 39–68 (IAAS…IRVY). 8 residues coordinate [4Fe-4S] cluster: cysteine 11, cysteine 14, cysteine 17, cysteine 21, cysteine 48, cysteine 51, cysteine 54, and cysteine 58.

As to quaternary structure, the cyanobacterial PSI reaction center is composed of one copy each of PsaA,B,C,D,E,F,I,J,K,L,M and X, and forms trimeric complexes. Requires [4Fe-4S] cluster as cofactor.

The protein localises to the cellular thylakoid membrane. It catalyses the reaction reduced [plastocyanin] + hnu + oxidized [2Fe-2S]-[ferredoxin] = oxidized [plastocyanin] + reduced [2Fe-2S]-[ferredoxin]. Functionally, apoprotein for the two 4Fe-4S centers FA and FB of photosystem I (PSI); essential for photochemical activity. FB is the terminal electron acceptor of PSI, donating electrons to ferredoxin. The C-terminus interacts with PsaA/B/D and helps assemble the protein into the PSI complex. Required for binding of PsaD and PsaE to PSI. PSI is a plastocyanin/cytochrome c6-ferredoxin oxidoreductase, converting photonic excitation into a charge separation, which transfers an electron from the donor P700 chlorophyll pair to the spectroscopically characterized acceptors A0, A1, FX, FA and FB in turn. The protein is Photosystem I iron-sulfur center of Synechococcus elongatus (strain ATCC 33912 / PCC 7942 / FACHB-805) (Anacystis nidulans R2).